We begin with the raw amino-acid sequence, 418 residues long: Gamma-glutamyl phosphate reductase (418 aa).

The protein belongs to the gamma-glutamyl phosphate reductase family.

It localises to the cytoplasm. The catalysed reaction is L-glutamate 5-semialdehyde + phosphate + NADP(+) = L-glutamyl 5-phosphate + NADPH + H(+). It participates in amino-acid biosynthesis; L-proline biosynthesis; L-glutamate 5-semialdehyde from L-glutamate: step 2/2. Functionally, catalyzes the NADPH-dependent reduction of L-glutamate 5-phosphate into L-glutamate 5-semialdehyde and phosphate. The product spontaneously undergoes cyclization to form 1-pyrroline-5-carboxylate. This chain is Gamma-glutamyl phosphate reductase, found in Histophilus somni (strain 2336) (Haemophilus somnus).